Here is a 324-residue protein sequence, read N- to C-terminus: Delta-aminolevulinic acid dehydratase (324 aa).

Positions 118, 120, and 128 each coordinate Zn(2+). Lys-195 (schiff-base intermediate with substrate) is an active-site residue. The 5-aminolevulinate site is built by Arg-205 and Arg-217. Glu-233 provides a ligand contact to Mg(2+). The active-site Schiff-base intermediate with substrate is Lys-248. 2 residues coordinate 5-aminolevulinate: Ser-274 and Tyr-313.

The protein belongs to the ALAD family. In terms of assembly, homooctamer. The cofactor is Zn(2+).

The catalysed reaction is 2 5-aminolevulinate = porphobilinogen + 2 H2O + H(+). Its pathway is porphyrin-containing compound metabolism; protoporphyrin-IX biosynthesis; coproporphyrinogen-III from 5-aminolevulinate: step 1/4. Its function is as follows. Catalyzes an early step in the biosynthesis of tetrapyrroles. Binds two molecules of 5-aminolevulinate per subunit, each at a distinct site, and catalyzes their condensation to form porphobilinogen. This Staphylococcus epidermidis (strain ATCC 12228 / FDA PCI 1200) protein is Delta-aminolevulinic acid dehydratase (hemB).